The sequence spans 323 residues: MADEHQFIENGLQRSQIDEFFADELGRAGYGGMDVAKTPMGTQIVLKAEKPGMVIGKGGKNIRKVTRELEDRFNLDDPQIDVQEVDEPDLNARIVADRLANALERGWYFRKAGHTTIDRIIESGALGAEIVLSGKVTGARSRVEKFNRGYIKHNGEPAQEIVDEGQGVAVMKLGTIGVTVKIIPPGAELPDDFEIHDDVDVEPVEQVAESDGVDSLLAEDPADIPDVGADDDVTVPQETPEEIIDEEVVEADPGVSSEDEEVVTEPVDIGGDDEDVEDIEVVSDDSGNDTETVAEEVEELDAEVEAEAEDLVAEMEDIDEEDV.

In terms of domain architecture, KH type-2 spans 17-86 (IDEFFADELG…DPQIDVQEVD (70 aa)). A disordered region spans residues 251–303 (ADPGVSSEDEEVVTEPVDIGGDDEDVEDIEVVSDDSGNDTETVAEEVEELDAE). The span at 270 to 303 (GGDDEDVEDIEVVSDDSGNDTETVAEEVEELDAE) shows a compositional bias: acidic residues.

It belongs to the universal ribosomal protein uS3 family. In terms of assembly, part of the 30S ribosomal subunit.

Binds the lower part of the 30S subunit head. The sequence is that of Small ribosomal subunit protein uS3 from Haloquadratum walsbyi (strain DSM 16790 / HBSQ001).